The primary structure comprises 126 residues: MAILGLGTDIVEIARIEAVISRSGERLARRVLSDNEWAIWETHQQPVRFLAKRFAVKEAAAKAFGTGIRNGLAFNQFEVFNDELGKPRLRLWGEALILAEKLGVAHMHVTLADERHYACATVILES.

Mg(2+) is bound by residues aspartate 9 and glutamate 58.

The protein belongs to the P-Pant transferase superfamily. AcpS family. It depends on Mg(2+) as a cofactor.

The protein resides in the cytoplasm. It catalyses the reaction apo-[ACP] + CoA = holo-[ACP] + adenosine 3',5'-bisphosphate + H(+). In terms of biological role, transfers the 4'-phosphopantetheine moiety from coenzyme A to a Ser of acyl-carrier-protein. The chain is Holo-[acyl-carrier-protein] synthase from Salmonella newport (strain SL254).